The following is a 186-amino-acid chain: MGGTFDPIHHGHLVVASEVASRFCLDEVIFVPTGRPPHKKEVSDPWHRYLMAVIATASNQRFSVSKIDIERTGPTFTVDTLRELREQLQSSDLFFITGTDALARIFSWKDADTLWSLAHFVAVSRPGHEVVDIPNDRISFLEVPAMAISSSNCRERVRSGLPIWYLVPEGVVQYIAKHGLYRSLYG.

This sequence belongs to the NadD family.

It carries out the reaction nicotinate beta-D-ribonucleotide + ATP + H(+) = deamido-NAD(+) + diphosphate. The protein operates within cofactor biosynthesis; NAD(+) biosynthesis; deamido-NAD(+) from nicotinate D-ribonucleotide: step 1/1. Catalyzes the reversible adenylation of nicotinate mononucleotide (NaMN) to nicotinic acid adenine dinucleotide (NaAD). This Tropheryma whipplei (strain TW08/27) (Whipple's bacillus) protein is Probable nicotinate-nucleotide adenylyltransferase.